Reading from the N-terminus, the 61-residue chain is Small ribosomal subunit protein uS14 (61 aa).

Cys24, Cys27, Cys40, and Cys43 together coordinate Zn(2+).

Belongs to the universal ribosomal protein uS14 family. Zinc-binding uS14 subfamily. Part of the 30S ribosomal subunit. Contacts proteins S3 and S10. Zn(2+) serves as cofactor.

Its function is as follows. Binds 16S rRNA, required for the assembly of 30S particles and may also be responsible for determining the conformation of the 16S rRNA at the A site. This chain is Small ribosomal subunit protein uS14, found in Malacoplasma penetrans (strain HF-2) (Mycoplasma penetrans).